The following is an 870-amino-acid chain: Protein csx2 (870 aa).

Residues 212-251 (TSPEISDAPPLSGNVDPLPINSPPLTNPVARDIDQTEPED) are disordered. One can recognise a PH domain in the interval 510–614 (TSAKQGLLLA…WIEAIQYSIS (105 aa)). Phosphoserine occurs at positions 625, 653, and 655. Positions 647-672 (RVASVTSPSRHNSDSKEKKQTKSPSL) are disordered. Over residues 657–666 (HNSDSKEKKQ) the composition is skewed to basic and acidic residues. The Arf-GAP domain occupies 670–791 (PSLVKTLKEM…RFIKSSFSHD (122 aa)). A C4-type zinc finger spans residues 686-710 (CADCNTTARVEWCAINFPVVLCIDC).

In Schizosaccharomyces pombe (strain 972 / ATCC 24843) (Fission yeast), this protein is Protein csx2 (csx2).